The chain runs to 405 residues: Pentatricopeptide repeat-containing protein At1g11630, mitochondrial (405 aa).

The transit peptide at 1–72 (MAFLFRIRTS…RSTSLSPDYH (72 aa)) directs the protein to the mitochondrion. 9 PPR repeats span residues 74–108 (DRII…QPDP), 110–144 (SESF…EIPR), 145–180 (TVKS…GIEP), 181–215 (DLET…WIKP), 216–250 (TAAS…GVHV), 251–285 (GVAT…RMRP), 286–320 (NSVT…GYKP), 321–355 (DSEC…NWVP), and 356–386 (SFSV…VKEK).

Belongs to the PPR family. P subfamily.

The protein resides in the mitochondrion. The sequence is that of Pentatricopeptide repeat-containing protein At1g11630, mitochondrial from Arabidopsis thaliana (Mouse-ear cress).